The chain runs to 229 residues: Potassium/proton antiporter CemA (229 aa).

Helical transmembrane passes span 7 to 27, 107 to 127, 154 to 174, and 189 to 209; these read FIPL…SFTF, ILHF…SILG, ILLL…ELVI, and IISG…KYWI.

This sequence belongs to the CemA family.

It localises to the plastid. Its subcellular location is the chloroplast inner membrane. It catalyses the reaction K(+)(in) + H(+)(out) = K(+)(out) + H(+)(in). Its function is as follows. Contributes to K(+)/H(+) antiport activity by supporting proton efflux to control proton extrusion and homeostasis in chloroplasts in a light-dependent manner to modulate photosynthesis. Prevents excessive induction of non-photochemical quenching (NPQ) under continuous-light conditions. Indirectly promotes efficient inorganic carbon uptake into chloroplasts. The protein is Potassium/proton antiporter CemA of Glycine max (Soybean).